The following is a 339-amino-acid chain: NADH-quinone oxidoreductase subunit H (339 aa).

9 helical membrane passes run 9–29 (IFPL…LILC), 50–70 (PNVV…KLLF), 82–102 (ILFI…WAVI), 115–135 (VGVL…IIAG), 161–181 (MGLV…SEII), 187–207 (IPWW…ISVL), 235–255 (MGFA…SAMT), 275–295 (IPGF…FLWI), and 311–331 (GWKV…SVLV).

This sequence belongs to the complex I subunit 1 family. In terms of assembly, NDH-1 is composed of 14 different subunits. Subunits NuoA, H, J, K, L, M, N constitute the membrane sector of the complex.

The protein resides in the cell inner membrane. The enzyme catalyses a quinone + NADH + 5 H(+)(in) = a quinol + NAD(+) + 4 H(+)(out). Functionally, NDH-1 shuttles electrons from NADH, via FMN and iron-sulfur (Fe-S) centers, to quinones in the respiratory chain. The immediate electron acceptor for the enzyme in this species is believed to be ubiquinone. Couples the redox reaction to proton translocation (for every two electrons transferred, four hydrogen ions are translocated across the cytoplasmic membrane), and thus conserves the redox energy in a proton gradient. This subunit may bind ubiquinone. In Rickettsia rickettsii (strain Iowa), this protein is NADH-quinone oxidoreductase subunit H.